Here is a 400-residue protein sequence, read N- to C-terminus: MRWVQRTSLVTQIAIAVVIGIVLAAVWPAATPHLAILGSLFISALKAVAPVLVFVLVMSAISNHTPGETTHIRPVLVLYAVGTLAAATVGVVASMWFPSTLTLQAPAQAAAGPGSVSEVLMNVLKSVVENPVKALLEANYIGILAWAIALGLALRHASAGTRAMLQDGAAAVTQVIQLVIRLAPLGILGLVASTFAEAGAQALWGYAQLLAVLLGCMLFVALVVNPLIVYVAIRRNPYPLVLMCLRESGVTAFFTRSSAANIPINLALAKRLRLNEDTYSIAIPLGATINMAGAAITISVLSLAAANTLGIQVDLPTALLLCVVASLCACGASGVAGGSLLLIPLACSLFGIGNDVAMQVVAIGFIIGILQDSAETALNSSTDVIFTAAACLAQERKAQV.

Helical transmembrane passes span 9–29 (LVTQIAIAVVIGIVLAAVWPA), 36–56 (ILGSLFISALKAVAPVLVFVL), 75–95 (VLVLYAVGTLAAATVGVVASM), 134–154 (ALLEANYIGILAWAIALGLAL), 175–195 (VIQLVIRLAPLGILGLVASTF), 209–229 (LLAVLLGCMLFVALVVNPLIV), 281–301 (IAIPLGATINMAGAAITISVL), 323–343 (VVASLCACGASGVAGGSLLLI), and 349–369 (LFGIGNDVAMQVVAIGFIIGI).

It belongs to the dicarboxylate/amino acid:cation symporter (DAACS) (TC 2.A.23) family.

The protein resides in the cell inner membrane. It catalyses the reaction L-serine(in) + Na(+)(in) = L-serine(out) + Na(+)(out). The enzyme catalyses L-threonine(in) + Na(+)(in) = L-threonine(out) + Na(+)(out). Functionally, involved in the import of serine and threonine into the cell, with the concomitant import of sodium (symport system). The chain is Serine/threonine transporter SstT from Acidovorax sp. (strain JS42).